The primary structure comprises 86 residues: Large ribosomal subunit protein uL23 (86 aa).

It belongs to the universal ribosomal protein uL23 family. In terms of assembly, part of the 50S ribosomal subunit. Contacts protein L29.

Its function is as follows. Binds to 23S rRNA. One of the proteins that surrounds the polypeptide exit tunnel on the outside of the ribosome. This Thermococcus kodakarensis (strain ATCC BAA-918 / JCM 12380 / KOD1) (Pyrococcus kodakaraensis (strain KOD1)) protein is Large ribosomal subunit protein uL23.